A 90-amino-acid chain; its full sequence is Putative large ribosomal subunit protein uL23c (90 aa).

Positions 1 to 46 (MDGIKYAVFTDKSIQLLGKKQYTSNVESRSTRTEIKHWVELWNSYE) are coded by first part of gene. The tract at residues 47–90 (MNSHRLPGKGRRMGPIMGHTMHYRRMIITLQSSYSIPPLRKKRT) is coded by second part of gene.

Belongs to the universal ribosomal protein uL23 family. As to quaternary structure, part of the 50S ribosomal subunit.

It is found in the plastid. The protein localises to the chloroplast. In terms of biological role, binds to 23S rRNA. In Spinacia oleracea (Spinach), this protein is Putative large ribosomal subunit protein uL23c (rpl23).